The following is a 282-amino-acid chain: Sulfur carrier protein FdhD (282 aa).

Cys-126 (cysteine persulfide intermediate) is an active-site residue. 265 to 270 serves as a coordination point for Mo-bis(molybdopterin guanine dinucleotide); it reads FVRNNR.

This sequence belongs to the FdhD family.

It is found in the cytoplasm. In terms of biological role, required for formate dehydrogenase (FDH) activity. Acts as a sulfur carrier protein that transfers sulfur from IscS to the molybdenum cofactor prior to its insertion into FDH. The chain is Sulfur carrier protein FdhD from Thermoplasma acidophilum (strain ATCC 25905 / DSM 1728 / JCM 9062 / NBRC 15155 / AMRC-C165).